A 480-amino-acid polypeptide reads, in one-letter code: Aspartyl/glutamyl-tRNA(Asn/Gln) amidotransferase subunit B (480 aa).

It belongs to the GatB/GatE family. GatB subfamily. Heterotrimer of A, B and C subunits.

It carries out the reaction L-glutamyl-tRNA(Gln) + L-glutamine + ATP + H2O = L-glutaminyl-tRNA(Gln) + L-glutamate + ADP + phosphate + H(+). The enzyme catalyses L-aspartyl-tRNA(Asn) + L-glutamine + ATP + H2O = L-asparaginyl-tRNA(Asn) + L-glutamate + ADP + phosphate + 2 H(+). Allows the formation of correctly charged Asn-tRNA(Asn) or Gln-tRNA(Gln) through the transamidation of misacylated Asp-tRNA(Asn) or Glu-tRNA(Gln) in organisms which lack either or both of asparaginyl-tRNA or glutaminyl-tRNA synthetases. The reaction takes place in the presence of glutamine and ATP through an activated phospho-Asp-tRNA(Asn) or phospho-Glu-tRNA(Gln). The sequence is that of Aspartyl/glutamyl-tRNA(Asn/Gln) amidotransferase subunit B from Streptococcus pneumoniae serotype 4 (strain ATCC BAA-334 / TIGR4).